An 842-amino-acid chain; its full sequence is Protein P (842 aa).

Residues 1–177 (MPLSYQHFRR…FCGSPYSWEQ (177 aa)) form a terminal protein domain (TP) region. Residues 178–345 (ELHHGAFLDG…YCLTHLVNLL (168 aa)) are spacer. A disordered region spans residues 186-273 (DGPSRMGEES…AKNIASRSAS (88 aa)). The span at 223–239 (GPQSQQRPLDGSQQGRS) shows a compositional bias: polar residues. Residues 346 to 689 (EDWGPCTEHG…YLNLYPVARQ (344 aa)) form a polymerase/reverse transcriptase domain (RT) region. Residues 356 to 599 (RHHIRIPRTP…YSLNFMGYVI (244 aa)) enclose the Reverse transcriptase domain. Mg(2+) contacts are provided by D428, D550, and D551.

It belongs to the hepadnaviridae P protein family.

The catalysed reaction is DNA(n) + a 2'-deoxyribonucleoside 5'-triphosphate = DNA(n+1) + diphosphate. The enzyme catalyses Endonucleolytic cleavage to 5'-phosphomonoester.. Its activity is regulated as follows. Activated by host HSP70 and HSP40 in vitro to be able to bind the epsilon loop of the pgRNA. Because deletion of the RNase H region renders the protein partly chaperone-independent, the chaperones may be needed indirectly to relieve occlusion of the RNA-binding site by this domain. Inhibited by several reverse-transcriptase inhibitors: Lamivudine, Adefovir and Entecavir. Multifunctional enzyme that converts the viral RNA genome into dsDNA in viral cytoplasmic capsids. This enzyme displays a DNA polymerase activity that can copy either DNA or RNA templates, and a ribonuclease H (RNase H) activity that cleaves the RNA strand of RNA-DNA heteroduplexes in a partially processive 3'- to 5'-endonucleasic mode. Neo-synthesized pregenomic RNA (pgRNA) are encapsidated together with the P protein, and reverse-transcribed inside the nucleocapsid. Initiation of reverse-transcription occurs first by binding the epsilon loop on the pgRNA genome, and is initiated by protein priming, thereby the 5'-end of (-)DNA is covalently linked to P protein. Partial (+)DNA is synthesized from the (-)DNA template and generates the relaxed circular DNA (RC-DNA) genome. After budding and infection, the RC-DNA migrates in the nucleus, and is converted into a plasmid-like covalently closed circular DNA (cccDNA). The activity of P protein does not seem to be necessary for cccDNA generation, and is presumably released from (+)DNA by host nuclear DNA repair machinery. The polypeptide is Protein P (Homo sapiens (Human)).